Reading from the N-terminus, the 336-residue chain is Biotin synthase (336 aa).

Residues 54–281 form the Radical SAM core domain; it reads QAIQLSTLLS…KSYVRLSAGR (228 aa). Residues C69, C73, and C76 each coordinate [4Fe-4S] cluster. Positions 113, 144, 204, and 276 each coordinate [2Fe-2S] cluster.

The protein belongs to the radical SAM superfamily. Biotin synthase family. Homodimer. [4Fe-4S] cluster is required as a cofactor. The cofactor is [2Fe-2S] cluster.

The catalysed reaction is (4R,5S)-dethiobiotin + (sulfur carrier)-SH + 2 reduced [2Fe-2S]-[ferredoxin] + 2 S-adenosyl-L-methionine = (sulfur carrier)-H + biotin + 2 5'-deoxyadenosine + 2 L-methionine + 2 oxidized [2Fe-2S]-[ferredoxin]. It participates in cofactor biosynthesis; biotin biosynthesis; biotin from 7,8-diaminononanoate: step 2/2. Its function is as follows. Catalyzes the conversion of dethiobiotin (DTB) to biotin by the insertion of a sulfur atom into dethiobiotin via a radical-based mechanism. The protein is Biotin synthase of Actinobacillus pleuropneumoniae serotype 7 (strain AP76).